We begin with the raw amino-acid sequence, 249 residues long: MSFIAIIPARYASTRLPGKPLADIHGKPMVVHVMERARESGASRVIVATDHPAVAEAVKAAGGEVCMTRADHNSGTERLAEVIEHYGFADDEIIVNVQGDEPLIPPVIVRQVAENLAGSQAGMATLAVPIESAEEAFNPNAVKVVMDAQGYALYFSRATIPWDRERFAQSKESIGDSLLRHIGIYAYRAGFVRRYVTWAPSQLEQIELLEQLRVLWYGEKIHVAVAKAMPTVGVDTQEDLQRVRDSIKG.

This sequence belongs to the KdsB family.

It is found in the cytoplasm. The enzyme catalyses 3-deoxy-alpha-D-manno-oct-2-ulosonate + CTP = CMP-3-deoxy-beta-D-manno-octulosonate + diphosphate. The protein operates within nucleotide-sugar biosynthesis; CMP-3-deoxy-D-manno-octulosonate biosynthesis; CMP-3-deoxy-D-manno-octulosonate from 3-deoxy-D-manno-octulosonate and CTP: step 1/1. Its pathway is bacterial outer membrane biogenesis; lipopolysaccharide biosynthesis. Functionally, activates KDO (a required 8-carbon sugar) for incorporation into bacterial lipopolysaccharide in Gram-negative bacteria. The polypeptide is 3-deoxy-manno-octulosonate cytidylyltransferase (Serratia proteamaculans (strain 568)).